Here is a 322-residue protein sequence, read N- to C-terminus: Cysteine protease YopT (322 aa).

Residues 43–72 (SHSNRQKKLSATIKHNQSSRSMLDRKLTSD) are disordered. Residues cysteine 139, histidine 258, and aspartate 274 contribute to the active site.

The protein belongs to the peptidase C58 family. In terms of assembly, interacts with human ARHA.

The protein resides in the secreted. Cysteine protease, which is translocated into infected cells and plays a central role in pathogenesis by cleaving the C-terminus end of the human small GTPase RhoA/ARHA, a regulator of cytoskeleton. Once cleaved, ARHA loses its lipid modification, and is released from the cell membrane, leading to the subsequent disruption of actin cytoskeleton of the host cell. This is Cysteine protease YopT (yopT) from Yersinia enterocolitica.